We begin with the raw amino-acid sequence, 554 residues long: MTDGKTTTVRAPRGTELSCKGWHQEGALRMLMNNLDPEVAERPEELVVYGGTGKAARSWECFWAIVEALRGLDGDETLLVQSGKPVAVFRTHPWAPRVLIANSLLVPEWADWETFRELERAGLTMFGQMTAGSWIYIGTQGILQGTYETFAALAEQRFGGTLRGRVCLTAGLGGMGGAQPLAITMNEGVALCVEVDPRRIDRRLEHRYLDERIDDLDAAVERAEEARREGEPLSIGIPGNAAEVFPALLERGYVPDAVTDQTSAHDPLGGYIPAGYTLEEAAELREADPGRYVREARASMARHCAAMVGFMERGAEVFDYGNNLRGEARLGGFERAFSYPGFVPAYIRPLFCEGKGPFRWAALSGDPDDIAATDEAVLELFPENGRLVRWIRQARERVRFQGLPARICWLGAGERHRAGLRFNELVAGGTISAPIVIGRDHLDSGSVASPYRETEGMRDGSDAIADWPVLNALLNTASGASWVAVHHGGGVGIGKSIHAGAQVVVDGTEEGAARIERVLTNDPSLGVVRHADAGYERAREAARALGIRMPMLGR.

Residues 50-51 (GG), Gln-128, 174-176 (GMG), Glu-194, Arg-199, 240-241 (NA), 261-265 (QTSAH), 271-272 (YI), and Tyr-320 each bind NAD(+). Residue Cys-408 is part of the active site. Gly-490 provides a ligand contact to NAD(+).

Belongs to the urocanase family. NAD(+) serves as cofactor.

The protein localises to the cytoplasm. It carries out the reaction 4-imidazolone-5-propanoate = trans-urocanate + H2O. Its pathway is amino-acid degradation; L-histidine degradation into L-glutamate; N-formimidoyl-L-glutamate from L-histidine: step 2/3. Functionally, catalyzes the conversion of urocanate to 4-imidazolone-5-propionate. This is Urocanate hydratase from Rubrobacter xylanophilus (strain DSM 9941 / JCM 11954 / NBRC 16129 / PRD-1).